A 442-amino-acid chain; its full sequence is CBL-interacting serine/threonine-protein kinase 14 (442 aa).

The Protein kinase domain maps to 22–276; that stretch reads YEVGKLVGCG…IEEIIHDPWF (255 aa). ATP is bound by residues 28–36 and K51; that span reads VGCGAFAKV. D144 (proton acceptor) is an active-site residue. The tract at residues 162–191 is activation loop; it reads DFGLSALTDQIRPDGLLHTLCGTPAYVAPE. At S166 the chain carries Phosphoserine. The residue at position 180 (T180) is a Phosphothreonine. The NAF domain occupies 305–329; the sequence is MGARRMNAFDIISGSPGFNLSGLFG. The interval 335–365 is PPI; sequence DRVERFVSAWTAERVVERLEEIVSAENLTVA.

This sequence belongs to the protein kinase superfamily. CAMK Ser/Thr protein kinase family. SNF1 subfamily. Interacts with CBL2. Interacts with CBL3. Interacts with CBL8. Interacts with CBL9. Interacts with KIN10 and KIN11. It depends on Mn(2+) as a cofactor. As to expression, predominant in roots, cauline leaves, and flowers. Ubiquitous with highest expression in 7-day-old seedlings and flower buds, followed by that in cauline leaves and young siliques.

Its subcellular location is the cytoplasm. The protein resides in the nucleus. The enzyme catalyses L-seryl-[protein] + ATP = O-phospho-L-seryl-[protein] + ADP + H(+). The catalysed reaction is L-threonyl-[protein] + ATP = O-phospho-L-threonyl-[protein] + ADP + H(+). CIPK serine-threonine protein kinases interact with CBL proteins. Binding of a CBL protein to the regulatory NAF domain of CIPK protein lead to the activation of the kinase in a calcium-dependent manner. This chain is CBL-interacting serine/threonine-protein kinase 14 (CIPK14), found in Arabidopsis thaliana (Mouse-ear cress).